The primary structure comprises 355 residues: Isopentenyl-diphosphate delta-isomerase (355 aa).

Position 6–7 (6–7 (RK)) interacts with substrate. Residues 62 to 64 (AMT), Ser93, and Asn122 contribute to the FMN site. Residue Gln152 coordinates substrate. Glu153 provides a ligand contact to Mg(2+). FMN-binding positions include Lys184, Thr214, 258–259 (GG), and 280–281 (AG).

Belongs to the IPP isomerase type 2 family. As to quaternary structure, homooctamer. Dimer of tetramers. It depends on FMN as a cofactor. Requires NADPH as cofactor. Mg(2+) is required as a cofactor.

It is found in the cytoplasm. The enzyme catalyses isopentenyl diphosphate = dimethylallyl diphosphate. Its function is as follows. Involved in the biosynthesis of isoprenoids. Catalyzes the 1,3-allylic rearrangement of the homoallylic substrate isopentenyl (IPP) to its allylic isomer, dimethylallyl diphosphate (DMAPP). This chain is Isopentenyl-diphosphate delta-isomerase, found in Bacillus pumilus (strain SAFR-032).